Reading from the N-terminus, the 348-residue chain is Serpentine receptor class alpha-29 (348 aa).

Helical transmembrane passes span 28–48 (FILM…QTLW), 108–130 (FLYY…DRLF), 145–165 (GFIV…FWTF), 193–213 (INDS…FLYI), 246–266 (CIII…PSIF), and 280–300 (LILA…LIVI).

This sequence belongs to the nematode receptor-like protein sra family.

The protein resides in the membrane. This chain is Serpentine receptor class alpha-29 (sra-29), found in Caenorhabditis elegans.